Here is an 83-residue protein sequence, read N- to C-terminus: Disintegrin isoform D-3 (83 aa).

In terms of domain architecture, Disintegrin spans 2-83 (PPVCGNELLE…GKSSDCPWNH (82 aa)). 7 disulfides stabilise this stretch: Cys5–Cys24, Cys16–Cys34, Cys18–Cys29, Cys28–Cys51, Cys42–Cys48, Cys47–Cys72, and Cys60–Cys79. The Cell attachment site signature appears at 64 to 66 (RGD).

It belongs to the venom metalloproteinase (M12B) family. P-II subfamily. P-IIa sub-subfamily. In terms of assembly, monomer (disintegrin). As to expression, expressed by the venom gland.

The protein resides in the secreted. Inhibits fibrinogen interaction with platelets. Acts by binding to alpha-IIb/beta-3 (ITGA2B/ITGB3) on the platelet surface and inhibits aggregation induced by ADP, thrombin, platelet-activating factor and collagen. This is Disintegrin isoform D-3 from Bitis arietans (African puff adder).